The primary structure comprises 345 residues: MKPWAAFHLIFLVASSLEGEVSNYGTRGAQDTEPTCRTEHQCTRDKIILQSQPGIPGIPGVPGTNGSEGLKGDPGPQGPPGIRGPDGIRGEAGPKGDKGDQGDKGDKGDKGDKGEDCNLDDCLPTEVRNCQDLLERGETLNGWYKIYPTEEVSMLVFCDMSTDGGGWLVFQRRQDGSVNFYREWESYKKGFGRQGSEFWLGNDKIHLLTNSGTQQLRIDLADFENIHTFATYSSFSIGNETEKYKLTLGSHLDGNMGDSLTLQNGRSFSTKDRDNDVSHIHCAVNFKGAWWYRKCHESNLNGLYHKGKHATYANGINWLTGKGYHYSYKYADMKIRPQKSETTVS.

A signal peptide spans 1–19; the sequence is MKPWAAFHLIFLVASSLEG. Residues 48–118 are disordered; it reads ILQSQPGIPG…DKGDKGEDCN (71 aa). A Collagen-like domain is found at 57–114; that stretch reads GIPGVPGTNGSEGLKGDPGPQGPPGIRGPDGIRGEAGPKGDKGDQGDKGDKGDKGDKG. Residues 86–116 show a composition bias toward basic and acidic residues; the sequence is DGIRGEAGPKGDKGDQGDKGDKGDKGDKGED. The 219-residue stretch at 121–339 folds into the Fibrinogen C-terminal domain; it reads DCLPTEVRNC…YADMKIRPQK (219 aa). 2 disulfide bridges follow: Cys130–Cys158 and Cys282–Cys295.

This sequence belongs to the ficolin lectin family. Veficolin subfamily. Post-translationally, hydroxylated, possibly at Pro-80. As to expression, expressed by the venom duct.

The protein resides in the secreted. Functionally, initiates complement activation and/or interferes in platelet aggregation and/or blood coagulation. The polypeptide is Ryncolin-4 (Cerberus rynchops (Dog-faced water snake)).